Here is a 660-residue protein sequence, read N- to C-terminus: Neurexin-2-beta (660 aa).

Positions 1 to 10 are enriched in gly residues; that stretch reads MPPGGSGQGG. Residues 1-27 are disordered; it reads MPPGGSGQGGCPRRPPALAGPLPPPPP. The N-terminal stretch at 1 to 46 is a signal peptide; the sequence is MPPGGSGQGGCPRRPPALAGPLPPPPPPPPLPLLLGLLLLLGAAEG. The Extracellular portion of the chain corresponds to 47–584; sequence ARVSSSLSTT…EVIRESSSTT (538 aa). The 209-residue stretch at 87–295 folds into the Laminin G-like domain; that stretch reads TTYIFGKGGA…HLRLVGEGPS (209 aa). Ca(2+)-binding residues include aspartate 139 and valine 156. Residue asparagine 186 is glycosylated (N-linked (GlcNAc...) asparagine). 2 residues coordinate Ca(2+): isoleucine 238 and asparagine 240. O-linked (Xyl...) (heparan sulfate) serine glycosylation is present at serine 350. Disordered stretches follow at residues 408–458 and 537–571; these read ATQD…LPPT and EPRR…RGPP. Residue asparagine 561 is glycosylated (N-linked (GlcNAc...) asparagine). The helical transmembrane segment at 585–605 threads the bilayer; sequence GMVVGIVAAAALCILILLYAM. Topologically, residues 606–660 are cytoplasmic; the sequence is YKYRNRDEGSYQVDQSRNYISNSAQSNGAVVKEKAPAAPKTPSKAKKNKDKEYYV. A disordered region spans residues 627–660; that stretch reads NSAQSNGAVVKEKAPAAPKTPSKAKKNKDKEYYV.

Belongs to the neurexin family. Interacts (via cytoplasmic C-terminal region) with CASK. Specific isoforms bind alpha-dystroglycan and neuroligins NLGN1, NLGN2 and NLGN3. Interacts with CBLN1, CBLN2 and, less avidly, with CBLN4. Interacts with CLSTN3. In terms of processing, O-glycosylated; contains heparan sulfate. Heparan sulfate attachment is required for synapse development by mediating interactions with neuroligins.

The protein resides in the presynaptic cell membrane. Its function is as follows. Neuronal cell surface protein that may be involved in cell recognition and cell adhesion. This is Neurexin-2-beta from Mus musculus (Mouse).